A 94-amino-acid chain; its full sequence is Co-chaperonin GroES (94 aa).

This sequence belongs to the GroES chaperonin family. Heptamer of 7 subunits arranged in a ring. Interacts with the chaperonin GroEL.

It is found in the cytoplasm. Its function is as follows. Together with the chaperonin GroEL, plays an essential role in assisting protein folding. The GroEL-GroES system forms a nano-cage that allows encapsulation of the non-native substrate proteins and provides a physical environment optimized to promote and accelerate protein folding. GroES binds to the apical surface of the GroEL ring, thereby capping the opening of the GroEL channel. This chain is Co-chaperonin GroES, found in Streptococcus mitis.